Consider the following 87-residue polypeptide: DNA-directed RNA polymerase subunit omega (87 aa).

This sequence belongs to the RNA polymerase subunit omega family. As to quaternary structure, the RNAP catalytic core consists of 2 alpha, 1 beta, 1 beta' and 1 omega subunit. When a sigma factor is associated with the core the holoenzyme is formed, which can initiate transcription.

The enzyme catalyses RNA(n) + a ribonucleoside 5'-triphosphate = RNA(n+1) + diphosphate. Promotes RNA polymerase assembly. Latches the N- and C-terminal regions of the beta' subunit thereby facilitating its interaction with the beta and alpha subunits. The sequence is that of DNA-directed RNA polymerase subunit omega from Acidothermus cellulolyticus (strain ATCC 43068 / DSM 8971 / 11B).